The chain runs to 821 residues: Palmitoyltransferase AKR1 (821 aa).

The tract at residues 1–118 (MVDKDANNEL…KDTASRKSMD (118 aa)) is disordered. Over 1-400 (MVDKDANNEL…TIYLNPKIGK (400 aa)) the chain is Cytoplasmic. Residues 93 to 117 (IQDESVNDKTSEPDENKDTASRKSM) are compositionally biased toward basic and acidic residues. ANK repeat units follow at residues 142–172 (PSLH…KAND), 176–205 (DGIT…SKAD), 213–243 (LKAS…DPTL), 247–277 (QSYN…STST), 289–318 (CDRT…DVSK), and 322–351 (NLFI…NIFA). The chain crosses the membrane as a helical span at residues 401–421 (LVTFFTPYIILPIMFQVCSFY). Residue Asn422 is a topological domain, lumenal. A helical membrane pass occupies residues 423–443 (GFVIPKLFFSVVLFAGSIYIL). The Cytoplasmic portion of the chain corresponds to 444–463 (QKLVIPTYLAEEKAIPKSPL). A helical membrane pass occupies residues 464–484 (LAGIFSGTAFWCIVTWAFNII). Topologically, residues 485 to 494 (PTLLFKKFIS) are lumenal. Residues 495 to 515 (NLVLSAFIYLFVWSFFKAMFI) form a helical membrane-spanning segment. Over 516–589 (NPGYVPVPSD…YNDIGVRNHK (74 aa)) the chain is Cytoplasmic. One can recognise a DHHC domain in the interval 546–596 (NFCVNTFVRKPLRSKYSRFNKKLIARFDHYCPWVYNDIGVRNHKLFVVFVY). The active-site S-palmitoyl cysteine intermediate is Cys576. A helical transmembrane segment spans residues 590–610 (LFVVFVYSLNLAVLLFTHLSI). Residues 611–650 (KLFKNTEKMSGYDSDDESQKCWLLSDELCVGYKSHHFQFN) lie on the Lumenal side of the membrane. A helical transmembrane segment spans residues 651-671 (LMLWCLIQYIWIAFLCLVQTF). Over 672–821 (QILKGLTTWE…YPPKLADVDA (150 aa)) the chain is Cytoplasmic.

Belongs to the DHHC palmitoyltransferase family. AKR/ZDHHC17 subfamily.

The protein localises to the early endosome membrane. Its subcellular location is the golgi apparatus membrane. It catalyses the reaction L-cysteinyl-[protein] + hexadecanoyl-CoA = S-hexadecanoyl-L-cysteinyl-[protein] + CoA. In terms of biological role, palmitoyltransferase specific for casein kinase 1. This chain is Palmitoyltransferase AKR1 (AKR1), found in Debaryomyces hansenii (strain ATCC 36239 / CBS 767 / BCRC 21394 / JCM 1990 / NBRC 0083 / IGC 2968) (Yeast).